The primary structure comprises 478 residues: Metalloendopeptidase OMA1, mitochondrial (478 aa).

The tract at residues 134 to 164 (LGRSIRKWWVALPANKKQLFREWSWRRRWHF) is stress-sensor region. Residues 163–183 (HFLGAGTGLLFIASLFFFTHL) form a helical membrane-spanning segment. Position 296 (His296) interacts with Zn(2+). The active site involves Glu297. The Zn(2+) site is built by His300 and Glu361. A disulfide bond links Cys376 and Cys434.

This sequence belongs to the peptidase M48 family. In terms of assembly, homooligomer. The cofactor is Zn(2+). In terms of processing, autocatalytically cleaved in response to mitochondrial depolarization both at the N-terminus and C-terminus to generate the short active form (S-OMA1). The S-OMA1 form is unstable. May form a redox-dependent disulfide bond. Exists in a semi-oxidized state and is activated by prolonged hypoxia.

It localises to the mitochondrion inner membrane. With respect to regulation, protease activity is activated upon autocatalytic cleavage in response to mitochondrial depolarization. Metalloprotease that is part of the quality control system in the inner membrane of mitochondria. Activated in response to various mitochondrial stress, leading to the proteolytic cleavage of target proteins, such as opa1 and dele1. Involved in the fusion of the mitochondrial inner membranes by mediating cleavage of opa1 at S1 position, generating the soluble opa1 (S-opa1), which cooperates with the membrane form (L-opa1) to coordinate the fusion of mitochondrial inner membranes. Following stress conditions that induce loss of mitochondrial membrane potential, mediates cleavage of opa1, leading to excess production of soluble opa1 (S-opa1) and negative regulation of mitochondrial fusion. Also acts as an activator of the integrated stress response (ISR): in response to mitochondrial stress, mediates cleavage of dele1 to generate the processed form of dele1 (S-DELE1), which translocates to the cytosol and activates eif2ak1/hri to trigger the ISR. Required for the stability of the respiratory supercomplexes. This chain is Metalloendopeptidase OMA1, mitochondrial, found in Danio rerio (Zebrafish).